A 136-amino-acid chain; its full sequence is Histone H3.3C (136 aa).

A disordered region spans residues 1-44; it reads MARTKQTARKSTGGKAPRKQLVTKAARKSAPSTGGMKKPHRYRP. Arginine 3 carries the post-translational modification Asymmetric dimethylarginine; by PRMT6; alternate. Citrulline; alternate is present on arginine 3. Threonine 4 carries the phosphothreonine; by HASPIN modification. The residue at position 5 (lysine 5) is an Allysine; alternate. An N6,N6,N6-trimethyllysine; alternate modification is found at lysine 5. Lysine 5 bears the N6,N6-dimethyllysine; alternate mark. N6-(2-hydroxyisobutyryl)lysine; alternate is present on lysine 5. Lysine 5 is subject to N6-(beta-hydroxybutyryl)lysine; alternate. The residue at position 5 (lysine 5) is an N6-acetyllysine; alternate. Position 5 is an N6-methyllysine; alternate (lysine 5). Glutamine 6 carries the post-translational modification 5-glutamyl dopamine; alternate. Glutamine 6 bears the 5-glutamyl serotonin; alternate mark. Threonine 7 bears the Phosphothreonine; by PKC mark. Residue arginine 9 is modified to Symmetric dimethylarginine. Lysine 10 is modified (N6,N6,N6-trimethyllysine; alternate). The residue at position 10 (lysine 10) is an N6,N6-dimethyllysine; alternate. N6-(2-hydroxyisobutyryl)lysine; alternate is present on lysine 10. Lysine 10 carries the N6-(beta-hydroxybutyryl)lysine; alternate modification. The residue at position 10 (lysine 10) is an N6-acetyllysine; alternate. Lysine 10 carries the N6-methyllysine; alternate modification. Lysine 10 is modified (N6-lactoyllysine; alternate). Serine 11 is modified (ADP-ribosylserine; alternate). Position 11 is a phosphoserine; alternate; by AURKB, AURKC, RPS6KA3, RPS6KA4 and RPS6KA5 (serine 11). A Phosphothreonine; by PKC modification is found at threonine 12. Residue lysine 15 is modified to N6-(2-hydroxyisobutyryl)lysine; alternate. At lysine 15 the chain carries N6-(beta-hydroxybutyryl)lysine; alternate. Lysine 15 carries the N6-acetyllysine; alternate modification. The residue at position 15 (lysine 15) is an N6-lactoyllysine; alternate. Residue lysine 15 is modified to N6-glutaryllysine; alternate. Lysine 15 is modified (N6-succinyllysine; alternate). Position 18 is an asymmetric dimethylarginine (arginine 18). N6-(2-hydroxyisobutyryl)lysine; alternate is present on residues lysine 19 and lysine 24. An N6-(beta-hydroxybutyryl)lysine; alternate mark is found at lysine 19 and lysine 24. 2 positions are modified to N6-acetyllysine; alternate: lysine 19 and lysine 24. An N6-methyllysine; alternate mark is found at lysine 19 and lysine 24. An N6-lactoyllysine; alternate mark is found at lysine 19 and lysine 24. Residues lysine 19 and lysine 24 each carry the N6-glutaryllysine; alternate modification. 2 positions are modified to N6-butyryllysine; alternate: lysine 19 and lysine 24. The residue at position 27 (arginine 27) is a Citrulline. Position 28 is an N6,N6,N6-trimethyllysine; alternate (lysine 28). The residue at position 28 (lysine 28) is an N6,N6-dimethyllysine; alternate. The residue at position 28 (lysine 28) is an N6-(2-hydroxyisobutyryl)lysine; alternate. Lysine 28 carries the post-translational modification N6-acetyllysine; alternate. Lysine 28 carries the N6-methyllysine; alternate modification. Lysine 28 bears the N6-lactoyllysine; alternate mark. At lysine 28 the chain carries N6-glutaryllysine; alternate. Serine 29 is subject to ADP-ribosylserine; alternate. Serine 29 bears the Phosphoserine; alternate; by AURKB, AURKC and RPS6KA5 mark. Serine 32 is modified (phosphoserine). An N6,N6,N6-trimethyllysine; alternate modification is found at lysine 37. Residue lysine 37 is modified to N6,N6-dimethyllysine; alternate. N6-(2-hydroxyisobutyryl)lysine; alternate is present on lysine 37. Lysine 37 is subject to N6-acetyllysine; alternate. An N6-methyllysine; alternate modification is found at lysine 37. The residue at position 38 (lysine 38) is an N6-methyllysine. Tyrosine 42 carries the post-translational modification Phosphotyrosine. An N6,N6,N6-trimethyllysine; alternate modification is found at lysine 57. An N6-(2-hydroxyisobutyryl)lysine; alternate modification is found at lysine 57. Lysine 57 bears the N6-(beta-hydroxybutyryl)lysine; alternate mark. An N6-acetyllysine; alternate modification is found at lysine 57. The residue at position 57 (lysine 57) is an N6-methyllysine; alternate. The residue at position 57 (lysine 57) is an N6-lactoyllysine; alternate. Lysine 57 carries the post-translational modification N6-glutaryllysine; alternate. At lysine 57 the chain carries N6-succinyllysine; alternate. The residue at position 58 (serine 58) is a Phosphoserine. An N6-(2-hydroxyisobutyryl)lysine; alternate mark is found at lysine 65 and lysine 80. N6-methyllysine; alternate is present on residues lysine 65 and lysine 80. Position 80 is an N6,N6,N6-trimethyllysine; alternate (lysine 80). At lysine 80 the chain carries N6,N6-dimethyllysine; alternate. Lysine 80 is subject to N6-acetyllysine; alternate. N6-lactoyllysine; alternate is present on lysine 80. N6-glutaryllysine; alternate is present on lysine 80. Lysine 80 bears the N6-succinyllysine; alternate mark. Threonine 81 is subject to Phosphothreonine. Serine 87 bears the Phosphoserine mark. A Phosphothreonine modification is found at threonine 108. N6-acetyllysine; alternate is present on lysine 116. N6-glutaryllysine; alternate is present on lysine 116.

The protein belongs to the histone H3 family. In terms of assembly, the nucleosome is a histone octamer containing two molecules each of H2A, H2B, H3 and H4 assembled in one H3-H4 heterotetramer and two H2A-H2B heterodimers. The octamer wraps approximately 147 bp of DNA. Acetylation is generally linked to gene activation. Acetylation on Lys-19 (H3K18ac) favors methylation at Arg-18 (H3R17me). Post-translationally, citrullination at Arg-18 by PADI4 impairs methylation and represses transcription. In terms of processing, asymmetric dimethylation at Arg-18 (H3R17me2a) by CARM1 is linked to gene activation. Asymmetric dimethylation at Arg-3 (H3R2me2a) by PRMT6 is linked to gene repression and is mutually exclusive with H3 Lys-5 methylation (H3K4me2 and H3K4me3). H3R2me2a is present at the 3' of genes regardless of their transcription state and is enriched on inactive promoters, while it is absent on active promoters. Methylation at Lys-5 (H3K4me) and Lys-80 (H3K79me) are linked to gene activation. Methylation at Lys-5 (H3K4me) facilitates subsequent acetylation of H3 and H4. Methylation at Lys-80 (H3K79me) is associated with DNA double-strand break (DSB) responses and is a specific target for TP53BP1. Methylation at Lys-10 (H3K9me) and Lys-28 (H3K27me) are linked to gene repression. Methylation at Lys-10 (H3K9me) is a specific target for HP1 proteins (CBX1, CBX3 and CBX5) and prevents subsequent phosphorylation at Ser-11 (H3S10ph) and acetylation of H3 and H4. Methylation at Lys-5 (H3K4me) and Lys-80 (H3K79me) require preliminary monoubiquitination of H2B at 'Lys-120'. Methylation at Lys-10 (H3K9me) and Lys-28 (H3K27me) are enriched in inactive X chromosome chromatin. Monomethylation at Lys-57 (H3K56me1) by EHMT2/G9A in G1 phase promotes interaction with PCNA and is required for DNA replication. Post-translationally, phosphorylated at Thr-4 (H3T3ph) by HASPIN during prophase and dephosphorylated during anaphase. Phosphorylation at Ser-11 (H3S10ph) by AURKB is crucial for chromosome condensation and cell-cycle progression during mitosis and meiosis. In addition phosphorylation at Ser-11 (H3S10ph) by RPS6KA4 and RPS6KA5 is important during interphase because it enables the transcription of genes following external stimulation, like mitogens, stress, growth factors or UV irradiation and result in the activation of genes, such as c-fos and c-jun. Phosphorylation at Ser-11 (H3S10ph), which is linked to gene activation, prevents methylation at Lys-10 (H3K9me) but facilitates acetylation of H3 and H4. Phosphorylation at Ser-11 (H3S10ph) by AURKB mediates the dissociation of HP1 proteins (CBX1, CBX3 and CBX5) from heterochromatin. Phosphorylation at Ser-11 (H3S10ph) is also an essential regulatory mechanism for neoplastic cell transformation. Phosphorylated at Ser-29 (H3S28ph) by MAP3K20 isoform 1, RPS6KA5 or AURKB during mitosis or upon ultraviolet B irradiation. Phosphorylation at Thr-7 (H3T6ph) by PRKCB is a specific tag for epigenetic transcriptional activation that prevents demethylation of Lys-5 (H3K4me) by LSD1/KDM1A. At centromeres, specifically phosphorylated at Thr-12 (H3T11ph) from prophase to early anaphase, by DAPK3 and PKN1. Phosphorylation at Thr-12 (H3T11ph) by PKN1 or isoform M2 of PKM (PKM2) is a specific tag for epigenetic transcriptional activation that promotes demethylation of Lys-10 (H3K9me) by KDM4C/JMJD2C. Phosphorylation at Tyr-42 (H3Y41ph) by JAK2 promotes exclusion of CBX5 (HP1 alpha) from chromatin. In terms of processing, lysine deamination at Lys-5 (H3K4all) to form allysine is mediated by LOXL2. Allysine formation by LOXL2 only takes place on H3K4me3 and results in gene repression. Butyrylation of histones marks active promoters and competes with histone acetylation. It is present during late spermatogenesis. Post-translationally, succinylation at Lys-80 (H3K79succ) by KAT2A takes place with a maximum frequency around the transcription start sites of genes. It gives a specific tag for epigenetic transcription activation. In terms of processing, serine ADP-ribosylation constitutes the primary form of ADP-ribosylation of proteins in response to DNA damage. Serine ADP-ribosylation at Ser-11 (H3S10ADPr) is mutually exclusive with phosphorylation at Ser-11 (H3S10ph) and impairs acetylation at Lys-10 (H3K9ac).

Its subcellular location is the nucleus. The protein resides in the chromosome. Core component of nucleosome. Nucleosomes wrap and compact DNA into chromatin, limiting DNA accessibility to the cellular machineries which require DNA as a template. Histones thereby play a central role in transcription regulation, DNA repair, DNA replication and chromosomal stability. DNA accessibility is regulated via a complex set of post-translational modifications of histones, also called histone code, and nucleosome remodeling. The chain is Histone H3.3C from Bos taurus (Bovine).